Here is a 778-residue protein sequence, read N- to C-terminus: Endonuclease MutS2 (778 aa).

328–335 (GPNTGGKT) contacts ATP. The Smr domain maps to 703–778 (LDLRGKRYEE…GSGCTIANLG (76 aa)).

This sequence belongs to the DNA mismatch repair MutS family. MutS2 subfamily. As to quaternary structure, homodimer. Binds to stalled ribosomes, contacting rRNA.

Functionally, endonuclease that is involved in the suppression of homologous recombination and thus may have a key role in the control of bacterial genetic diversity. Its function is as follows. Acts as a ribosome collision sensor, splitting the ribosome into its 2 subunits. Detects stalled/collided 70S ribosomes which it binds and splits by an ATP-hydrolysis driven conformational change. Acts upstream of the ribosome quality control system (RQC), a ribosome-associated complex that mediates the extraction of incompletely synthesized nascent chains from stalled ribosomes and their subsequent degradation. Probably generates substrates for RQC. This Streptococcus equi subsp. zooepidemicus (strain H70) protein is Endonuclease MutS2.